Reading from the N-terminus, the 37-residue chain is Large ribosomal subunit protein bL36A (37 aa).

The protein belongs to the bacterial ribosomal protein bL36 family.

The protein is Large ribosomal subunit protein bL36A of Neisseria meningitidis serogroup C (strain 053442).